A 334-amino-acid polypeptide reads, in one-letter code: Phenazine-1-carboxylate N-methyltransferase (334 aa).

S-adenosyl-L-methionine-binding residues include D198 and R241.

The protein belongs to the class I-like SAM-binding methyltransferase superfamily. Cation-independent O-methyltransferase family. Homodimer in solution. Probably interacts transiently with PhzS.

It carries out the reaction phenazine-1-carboxylate + S-adenosyl-L-methionine = 5-methyl-phenazine-1-carboxylate + S-adenosyl-L-homocysteine. Its pathway is secondary metabolite biosynthesis; pyocyanine biosynthesis. With respect to regulation, in vitro, requires PhzS for activity. Functionally, involved in the biosynthesis of pyocyanine, a blue-pigmented phenazine derivative, which plays a role in virulence. Converts phenazine-1-carboxylate (PCA) to 5-methylphenazine-1-carboxylate (5-methyl-PCA). The protein is Phenazine-1-carboxylate N-methyltransferase of Pseudomonas aeruginosa (strain ATCC 15692 / DSM 22644 / CIP 104116 / JCM 14847 / LMG 12228 / 1C / PRS 101 / PAO1).